The chain runs to 506 residues: Histone deacetylase complex subunit CTI6 (506 aa).

The segment at 49 to 71 (EESVKQEDVPMEGGEGEVEEEEG) is disordered. Residues 62 to 71 (GEGEVEEEEG) show a composition bias toward acidic residues. The segment at 72–123 (ETRCICGELDTPDDSGFFIQCEQCSSWQHGYCVSITQDNAPDKYWCEQCRPE) adopts a PHD-type zinc-finger fold. The interval 138 to 425 (IYKPVQEKRR…KPRLPPQRTS (288 aa)) is disordered. Phosphothreonine is present on threonine 174. Serine 175 is subject to Phosphoserine. Residue threonine 177 is modified to Phosphothreonine. Residues 179–195 (DNVDDIGDEEDEVEDEA) show a composition bias toward acidic residues. A phosphoserine mark is found at serine 216 and serine 267. Composition is skewed to basic and acidic residues over residues 231–271 (DSDK…HQED) and 312–342 (DDMK…EKES). The segment covering 373–393 (ASSRGSKRVSKPARKGNRTRR) has biased composition (basic residues). The span at 394 to 404 (SNTSSDTNQNR) shows a compositional bias: polar residues. A compositionally biased stretch (basic and acidic residues) spans 405-415 (RSADIGTDKPV).

As to quaternary structure, component of the RPD3C(L) complex composed of at least ASH1, CTI6, DEP1, PHO23, RPD3, RXT2, RXT3, SAP30, SDS3, SIN3, UME1 and UME6. Interacts with CYC8.

Its subcellular location is the nucleus. Component of the RPD3C(L) histone deacetylase complex (HDAC). Responsible for the deacetylation of lysine residues on the N-terminal part of the core histones (H2A, H2B, H3 and H4). Histone deacetylation gives a tag for epigenetic repression and plays an important role in transcriptional regulation, cell cycle progression and developmental events. CTI6 links the SAGA coactivator to the CYC8-TUP1 corepressor. Involved in transcription regulation of heme-regulated genes and required for GCN5 recruitment, histone H3 acetylation and SPT15/TBP binding to promoters. The protein is Histone deacetylase complex subunit CTI6 (CTI6) of Saccharomyces cerevisiae (strain ATCC 204508 / S288c) (Baker's yeast).